Consider the following 360-residue polypeptide: Phospho-N-acetylmuramoyl-pentapeptide-transferase (360 aa).

10 helical membrane passes run 24 to 44 (RAVMAALTALAFSLMFGPWTI), 69 to 89 (GTPTMGGSLILTAITVSTLLW), 92 to 112 (WANPYIWILLGVLLATGALGF), 133 to 153 (MVWQSSVAIIASLALFYLAAN), 158 to 178 (ILIVPFFKQIALPLGVVGFLV), 199 to 219 (GLATFPVVLVAAGLAIFAYAS), 239 to 259 (VVIFCTAMCGACLGFLWFNAY), 263 to 283 (VFMGDVGALALGAALGTVAVI), 288 to 308 (FVLVIMGGLFVVEAVSVMLQV), and 337 to 357 (QVVVRFWIITIVLVLIGLSTL).

This sequence belongs to the glycosyltransferase 4 family. MraY subfamily. The cofactor is Mg(2+).

The protein localises to the cell inner membrane. The enzyme catalyses UDP-N-acetyl-alpha-D-muramoyl-L-alanyl-gamma-D-glutamyl-meso-2,6-diaminopimeloyl-D-alanyl-D-alanine + di-trans,octa-cis-undecaprenyl phosphate = di-trans,octa-cis-undecaprenyl diphospho-N-acetyl-alpha-D-muramoyl-L-alanyl-D-glutamyl-meso-2,6-diaminopimeloyl-D-alanyl-D-alanine + UMP. Its pathway is cell wall biogenesis; peptidoglycan biosynthesis. Catalyzes the initial step of the lipid cycle reactions in the biosynthesis of the cell wall peptidoglycan: transfers peptidoglycan precursor phospho-MurNAc-pentapeptide from UDP-MurNAc-pentapeptide onto the lipid carrier undecaprenyl phosphate, yielding undecaprenyl-pyrophosphoryl-MurNAc-pentapeptide, known as lipid I. This chain is Phospho-N-acetylmuramoyl-pentapeptide-transferase, found in Neisseria meningitidis serogroup C / serotype 2a (strain ATCC 700532 / DSM 15464 / FAM18).